The following is a 468-amino-acid chain: Monocarboxylate transporter 6 (468 aa).

The Cytoplasmic portion of the chain corresponds to 1 to 13 (MARALEQADGRWA). A helical transmembrane segment spans residues 14 to 34 (WVVLLSSLVTQALTLGFPTCI). At 35 to 53 (GVFFTDLQRDFQASNSETS) the chain is on the extracellular side. Residues 54-74 (WFPSILGAMVHGGGPLCSILV) traverse the membrane as a helical segment. Residues 75–80 (KHFGCR) are Cytoplasmic-facing. The chain crosses the membrane as a helical span at residues 81–101 (VTMMLGGVLASLGMVVSTFSG). Position 102 (Ser102) is a topological domain, extracellular. Residues 103–122 (LTHLFLTAGVITGLGMCFSF) traverse the membrane as a helical segment. The Cytoplasmic portion of the chain corresponds to 123–138 (QSSITVVGLYFVRRRP). A helical transmembrane segment spans residues 139–159 (LANALASMGLSMGVTLWPLLA). The Extracellular portion of the chain corresponds to 160–171 (RYLLETLGWRGA). The helical transmembrane segment at 172 to 192 (FLIFGGILLHCCVCGALLRPV) threads the bilayer. At 193–239 (ATNEVPEPKEDPLLPPKIPTRSCLATCVSTIRYHLAFDILRHNMGFC) the chain is on the cytoplasmic side. The helical transmembrane segment at 240–260 (IYVTGVTWMNLGFALPHIFLV) threads the bilayer. Over 261–274 (PYAMHHGVDDYWAA) the chain is Extracellular. A helical membrane pass occupies residues 275 to 295 (MLMSIVGFCNIFLRPMAGLLL). The Cytoplasmic segment spans residues 296–306 (AGRKSLAAYRK). The chain crosses the membrane as a helical span at residues 307 to 327 (YLFAVAILINGLTNLICTVSA). Over 328 to 330 (DFR) the chain is Extracellular. A helical membrane pass occupies residues 331–351 (VLLGYCLVYSLSMCGVGILVF). Residues 352 to 368 (QVLMDIVPMDRFPSALG) are Cytoplasmic-facing. A helical membrane pass occupies residues 369-389 (LFTILCGVTSLISPPLAGLLL). The Extracellular portion of the chain corresponds to 390-396 (DKTNNFS). The helical transmembrane segment at 397 to 417 (YVFYMSSGFLVSGSLILGVGF) threads the bilayer. Over 418–468 (YAAEKKKLKQDGQAKMENATSEMTPMHDLTSEDKDSAKKQPYPESIYMTNV) the chain is Cytoplasmic. Residues 429–468 (GQAKMENATSEMTPMHDLTSEDKDSAKKQPYPESIYMTNV) are disordered. Positions 446 to 455 (LTSEDKDSAK) are enriched in basic and acidic residues.

This sequence belongs to the major facilitator superfamily. Monocarboxylate porter (TC 2.A.1.13) family.

It localises to the cell membrane. In terms of biological role, proton-linked monocarboxylate transporter. Catalyzes the rapid transport across the plasma membrane of many monocarboxylates such as lactate, pyruvate, branched-chain oxo acids derived from leucine, valine and isoleucine, and the ketone bodies acetoacetate, beta-hydroxybutyrate and acetate. This Mus musculus (Mouse) protein is Monocarboxylate transporter 6 (Slc16a5).